Here is an 85-residue protein sequence, read N- to C-terminus: RNA-binding protein Hfq (85 aa).

The 60-residue stretch at 9–68 folds into the Sm domain; sequence DPFLNALRRERIPVSIYLVNGIKLQGQIESFDQFVVLLKNTVSQMVYKHAISTVVPARIP.

The protein belongs to the Hfq family. In terms of assembly, homohexamer.

Its function is as follows. RNA chaperone that binds small regulatory RNA (sRNAs) and mRNAs to facilitate mRNA translational regulation in response to envelope stress, environmental stress and changes in metabolite concentrations. Also binds with high specificity to tRNAs. This Idiomarina loihiensis (strain ATCC BAA-735 / DSM 15497 / L2-TR) protein is RNA-binding protein Hfq.